Here is a 467-residue protein sequence, read N- to C-terminus: Glutamate--tRNA ligase (467 aa).

The 'HIGH' region signature appears at P9–G19. The short motif at K237–R241 is the 'KMSKS' region element. K240 serves as a coordination point for ATP.

This sequence belongs to the class-I aminoacyl-tRNA synthetase family. Glutamate--tRNA ligase type 1 subfamily. As to quaternary structure, monomer.

It localises to the cytoplasm. The catalysed reaction is tRNA(Glu) + L-glutamate + ATP = L-glutamyl-tRNA(Glu) + AMP + diphosphate. Functionally, catalyzes the attachment of glutamate to tRNA(Glu) in a two-step reaction: glutamate is first activated by ATP to form Glu-AMP and then transferred to the acceptor end of tRNA(Glu). The chain is Glutamate--tRNA ligase from Xanthomonas campestris pv. campestris (strain B100).